Consider the following 309-residue polypeptide: tRNA-cytidine(32) 2-sulfurtransferase (309 aa).

The PP-loop motif motif lies at 57 to 62 (SGGKDS). Residues Cys-132, Cys-135, and Cys-223 each contribute to the [4Fe-4S] cluster site.

The protein belongs to the TtcA family. Homodimer. Mg(2+) serves as cofactor. It depends on [4Fe-4S] cluster as a cofactor.

It is found in the cytoplasm. It carries out the reaction cytidine(32) in tRNA + S-sulfanyl-L-cysteinyl-[cysteine desulfurase] + AH2 + ATP = 2-thiocytidine(32) in tRNA + L-cysteinyl-[cysteine desulfurase] + A + AMP + diphosphate + H(+). Its pathway is tRNA modification. In terms of biological role, catalyzes the ATP-dependent 2-thiolation of cytidine in position 32 of tRNA, to form 2-thiocytidine (s(2)C32). The sulfur atoms are provided by the cysteine/cysteine desulfurase (IscS) system. This chain is tRNA-cytidine(32) 2-sulfurtransferase, found in Variovorax paradoxus (strain S110).